Here is a 1370-residue protein sequence, read N- to C-terminus: DNA-directed RNA polymerase subunit beta (1370 aa).

It belongs to the RNA polymerase beta chain family. As to quaternary structure, the RNAP catalytic core consists of 2 alpha, 1 beta, 1 beta' and 1 omega subunit. When a sigma factor is associated with the core the holoenzyme is formed, which can initiate transcription.

It carries out the reaction RNA(n) + a ribonucleoside 5'-triphosphate = RNA(n+1) + diphosphate. In terms of biological role, DNA-dependent RNA polymerase catalyzes the transcription of DNA into RNA using the four ribonucleoside triphosphates as substrates. The sequence is that of DNA-directed RNA polymerase subunit beta from Bordetella pertussis (strain Tohama I / ATCC BAA-589 / NCTC 13251).